The chain runs to 61 residues: MAKTALKVKAARKPKFGVRAYTRCQRCGRPHSVYRKFGLCRICLREMAHAGQLPGVTKSSW.

Residues cysteine 24, cysteine 27, cysteine 40, and cysteine 43 each coordinate Zn(2+).

Belongs to the universal ribosomal protein uS14 family. Zinc-binding uS14 subfamily. In terms of assembly, part of the 30S ribosomal subunit. Contacts proteins S3 and S10. Zn(2+) is required as a cofactor.

Its function is as follows. Binds 16S rRNA, required for the assembly of 30S particles and may also be responsible for determining the conformation of the 16S rRNA at the A site. In Cutibacterium acnes (strain DSM 16379 / KPA171202) (Propionibacterium acnes), this protein is Small ribosomal subunit protein uS14B.